A 373-amino-acid chain; its full sequence is MRSGFLSGARRLWARRAFSRTPPPSEELLARGGPLRAFLERRVGSEAGGLDAGYPQLAAAARLLSEKERELRDTESLLHDENEDLKKLAESEIALCQKQITELKHQIISLLVPSEEMDGSDLILEVTAGVGGQEAMLFTSEMFDMYQQYAAFKRWHFETLEYFPSELGGLRHASASVGGPEAYRHMKFEGGVHRVQRVPKTEKQGRIHTSTMTVAILPQPTEIKLVINPKDLRIDTKRASGAGGQHVNTTDSAVRIVHLPTGIISECQQERSQLKNRELAMKKLRARLYSMHLEEETAKRYNARKIQVGTKGRSEKIRTYNFPQNRVTDHRINKSLHDLESFMQGDCLLDDMIQSLKDCSDYEALVEMISRRD.

The transit peptide at Met-1–Ser-25 directs the protein to the mitochondrion. Residues Gln-56–Leu-110 are a coiled coil. A GGQ domain region spans residues Pro-229–Leu-293. Positions Gly-243–Gln-245 match the GGQ motif. N5-methylglutamine is present on Gln-245.

It belongs to the prokaryotic/mitochondrial release factor family. Post-translationally, methylation of glutamine in the GGQ triplet by HEMK1 is conserved from bacteria to mammals.

It is found in the mitochondrion. In terms of biological role, mitochondrial peptide chain release factor that directs the termination of translation in response to the peptide chain termination codons UAA and UAG. This is Peptide chain release factor 1-like, mitochondrial (Mtrf1l) from Mus musculus (Mouse).